The chain runs to 412 residues: uncharacterized protein (412 aa).

Positions 1-21 (MIIPMLRILLIVLFVLNLVTS) are cleaved as a signal peptide. Disordered stretches follow at residues 85-134 (QPPA…STTT), 250-294 (STTE…TPGT), and 327-357 (VELG…HVRE). Low complexity predominate over residues 88 to 105 (ASLTSLPAAPPSAQVAPP). Positions 124–134 (TPQASISSTTT) are enriched in polar residues. Composition is skewed to low complexity over residues 250–259 (STTENTTEQS) and 266–293 (TTST…GTPG). Over residues 330 to 347 (GEGDDDEENDDDSSEEEE) the composition is skewed to acidic residues. A compositionally biased stretch (basic and acidic residues) spans 348–357 (TKPPARHVRE). A ShKT domain is found at 371–408 (CDEEEDDKGKICKLWAAGGLCGTHKPTMFLFCRKTCLC).

This is an uncharacterized protein from Caenorhabditis elegans.